Reading from the N-terminus, the 91-residue chain is Sec-independent protein translocase protein TatA (91 aa).

The helical transmembrane segment at 3–23 threads the bilayer; sequence FFGIGLPEMLVILAIALLVFG. The tract at residues 57-91 is disordered; that stretch reads DRTPATPAEATVEPPVLDSAPTEAVTVEKQTETQV. Low complexity predominate over residues 59-72; the sequence is TPATPAEATVEPPV.

This sequence belongs to the TatA/E family. In terms of assembly, forms a complex with TatC.

Its subcellular location is the cell inner membrane. In terms of biological role, part of the twin-arginine translocation (Tat) system that transports large folded proteins containing a characteristic twin-arginine motif in their signal peptide across membranes. TatA could form the protein-conducting channel of the Tat system. The polypeptide is Sec-independent protein translocase protein TatA (Synechococcus elongatus (strain ATCC 33912 / PCC 7942 / FACHB-805) (Anacystis nidulans R2)).